Reading from the N-terminus, the 305-residue chain is Protoheme IX farnesyltransferase (305 aa).

9 helical membrane passes run 28–48, 52–72, 101–121, 122–142, 149–169, 174–194, 218–238, 240–260, and 283–303; these read IIEL…QGVP, LVLL…ALNM, LAFG…TVNW, LSAW…TMIL, NIVW…SSVT, WAPV…YWPL, VVAR…LLLT, LGYT…FWLW, and LFHW…VDPF.

It belongs to the UbiA prenyltransferase family. Protoheme IX farnesyltransferase subfamily.

Its subcellular location is the cell membrane. The catalysed reaction is heme b + (2E,6E)-farnesyl diphosphate + H2O = Fe(II)-heme o + diphosphate. It participates in porphyrin-containing compound metabolism; heme O biosynthesis; heme O from protoheme: step 1/1. Functionally, converts heme B (protoheme IX) to heme O by substitution of the vinyl group on carbon 2 of heme B porphyrin ring with a hydroxyethyl farnesyl side group. This is Protoheme IX farnesyltransferase from Streptomyces avermitilis (strain ATCC 31267 / DSM 46492 / JCM 5070 / NBRC 14893 / NCIMB 12804 / NRRL 8165 / MA-4680).